The following is a 456-amino-acid chain: Gustatory receptor for sugar taste 64a (456 aa).

A disordered region spans residues 1 to 30; it reads MKGPNLNFRKTPSKDNGVKQVESLARPETP. Topologically, residues 1–91 are cytoplasmic; the sequence is MKGPNLNFRK…RESNPRRVRF (91 aa). The helical transmembrane segment at 92-114 threads the bilayer; it reads AYKSIPMFVTLIFMIATSILFLS. Residues 115–128 lie on the Extracellular side of the membrane; the sequence is MFTHLLKIGITAKN. Residues 129-150 traverse the membrane as a helical segment; that stretch reads FVGLVFFGCVLSAYVVFIRLAK. Sucrose is bound at residue G131. At 151–182 the chain is on the cytoplasmic side; sequence KWPAVVRIWTRTEIPFTKPPYEIPKRNLSRRV. The helical transmembrane segment at 183 to 205 threads the bilayer; it reads QLAALAIIGLSLGEHALYQVSAI. Sucrose contacts are provided by E196, H197, and Y234. 5 residues coordinate D-maltose: E196, H197, Y234, N253, and T257. Topologically, residues 206-245 are extracellular; the sequence is LSYTRRIQMCANITTVPSFNNYMQTNYDYVFQLLPYSPII. A helical membrane pass occupies residues 246-271; it reads AVLILLINGACTFVWNYMDLFIMMIS. A sucrose-binding site is contributed by T257. Residues 272–318 lie on the Cytoplasmic side of the membrane; the sequence is KGLSYRFEQITTRIRKLEHEEVCESVFIQIREHYVKMCELLEFVDSA. The chain crosses the membrane as a helical span at residues 319–342; it reads MSSLILLSCVNNLYFVCYQLLNVF. The Extracellular portion of the chain corresponds to 343–350; that stretch reads NKLRWPIN. The helical transmembrane segment at 351-373 threads the bilayer; it reads YIYFWYSLLYLIGRTAFVFLTAA. Y353 contacts sucrose. Y353 contributes to the D-maltose binding site. Residues 374–421 are Cytoplasmic-facing; sequence DINEESKRGLGVLRRVSSRSWCVEVERLIFQMTTQTVALSGKKFYFLT. A helical transmembrane segment spans residues 422 to 441; the sequence is RRLLFGMAGTIVTYELVLLQ. The Extracellular portion of the chain corresponds to 442 to 456; the sequence is FDEPNRRKGLQPLCA.

It belongs to the insect chemoreceptor superfamily. Gustatory receptor (GR) family. Gr5a subfamily. In terms of assembly, homotetramer. Expressed in Gr5a-expressing sugar-sensing cells.

It is found in the cell membrane. Its function is as follows. One of the few identified sugar gustatory receptors identified so far and which promotes the starvation-induced increase of feeding motivation. Required in combination with Gr64f to detect sucrose, maltose, and glucose. This Drosophila melanogaster (Fruit fly) protein is Gustatory receptor for sugar taste 64a (Gr64a).